A 513-amino-acid chain; its full sequence is ATP synthase subunit alpha (513 aa).

Residue 169-176 (GDRQTGKT) coordinates ATP.

This sequence belongs to the ATPase alpha/beta chains family. In terms of assembly, F-type ATPases have 2 components, CF(1) - the catalytic core - and CF(0) - the membrane proton channel. CF(1) has five subunits: alpha(3), beta(3), gamma(1), delta(1), epsilon(1). CF(0) has three main subunits: a(1), b(2) and c(9-12). The alpha and beta chains form an alternating ring which encloses part of the gamma chain. CF(1) is attached to CF(0) by a central stalk formed by the gamma and epsilon chains, while a peripheral stalk is formed by the delta and b chains.

Its subcellular location is the cell inner membrane. It carries out the reaction ATP + H2O + 4 H(+)(in) = ADP + phosphate + 5 H(+)(out). In terms of biological role, produces ATP from ADP in the presence of a proton gradient across the membrane. The alpha chain is a regulatory subunit. The sequence is that of ATP synthase subunit alpha from Ruthia magnifica subsp. Calyptogena magnifica.